Reading from the N-terminus, the 304-residue chain is MKPAMSVEIGSLKLRNPVMTASGTFGYGEEFSQYVDLEKIGAFVTKGLSLKPRAGNPTPRIVETPGGMLNAIGLQNVGIDAFIQKKVPFLRSVNTPAIANFFGYTPDEYAELASRLDAIPEVAALEVNISCPNVKQGGIVFGTDPGCAASVVAACRAATQKTLIVKLSPNVTDIVEMAQACEGAGADALSVINTLTGMAIDLERRRPVLANVTGGLSGPAIKPVALRMVWQVARAVKVPVIGIGGIMSATDALEFILAGATAVQVGTASFVNPAAAQEIAEGMEQWLAERGIADISSLIGALEG.

Residues S22 and 46 to 47 (KG) each bind FMN. Substrate contacts are provided by residues K46 and 70-74 (NAIGL). The FMN site is built by N100 and N128. N128 lines the substrate pocket. C131 functions as the Nucleophile in the catalytic mechanism. FMN contacts are provided by K166 and I192. 193–194 (NT) lines the substrate pocket. Residues G218, 244–245 (GG), and 266–267 (GT) contribute to the FMN site.

Belongs to the dihydroorotate dehydrogenase family. Type 1 subfamily. Heterotetramer of 2 PyrK and 2 PyrD type B subunits. It depends on FMN as a cofactor.

Its subcellular location is the cytoplasm. It catalyses the reaction (S)-dihydroorotate + NAD(+) = orotate + NADH + H(+). It functions in the pathway pyrimidine metabolism; UMP biosynthesis via de novo pathway; orotate from (S)-dihydroorotate (NAD(+) route): step 1/1. Catalyzes the conversion of dihydroorotate to orotate with NAD(+) as electron acceptor. In Trichlorobacter lovleyi (strain ATCC BAA-1151 / DSM 17278 / SZ) (Geobacter lovleyi), this protein is Dihydroorotate dehydrogenase B (NAD(+)), catalytic subunit (pyrD).